The primary structure comprises 599 residues: Elongation factor 4 (599 aa).

The 183-residue stretch at Lys-2–Gln-184 folds into the tr-type G domain. Residues Asp-14–Thr-19 and Asn-131–Asp-134 each bind GTP.

Belongs to the TRAFAC class translation factor GTPase superfamily. Classic translation factor GTPase family. LepA subfamily.

Its subcellular location is the cell inner membrane. It carries out the reaction GTP + H2O = GDP + phosphate + H(+). Required for accurate and efficient protein synthesis under certain stress conditions. May act as a fidelity factor of the translation reaction, by catalyzing a one-codon backward translocation of tRNAs on improperly translocated ribosomes. Back-translocation proceeds from a post-translocation (POST) complex to a pre-translocation (PRE) complex, thus giving elongation factor G a second chance to translocate the tRNAs correctly. Binds to ribosomes in a GTP-dependent manner. In Salmonella paratyphi A (strain ATCC 9150 / SARB42), this protein is Elongation factor 4.